The primary structure comprises 204 residues: Cytochrome c biogenesis ATP-binding export protein CcmA (204 aa).

The ABC transporter domain maps to L3–T204. G35 to T42 contacts ATP.

The protein belongs to the ABC transporter superfamily. CcmA exporter (TC 3.A.1.107) family. In terms of assembly, the complex is composed of two ATP-binding proteins (CcmA) and two transmembrane proteins (CcmB).

The protein localises to the cell inner membrane. The catalysed reaction is heme b(in) + ATP + H2O = heme b(out) + ADP + phosphate + H(+). Its function is as follows. Part of the ABC transporter complex CcmAB involved in the biogenesis of c-type cytochromes; once thought to export heme, this seems not to be the case, but its exact role is uncertain. Responsible for energy coupling to the transport system. The sequence is that of Cytochrome c biogenesis ATP-binding export protein CcmA from Nitrobacter hamburgensis (strain DSM 10229 / NCIMB 13809 / X14).